A 58-amino-acid polypeptide reads, in one-letter code: UPF0391 membrane protein Shewmr4_2671 (58 aa).

2 consecutive transmembrane segments (helical) span residues 6 to 26 (LMFL…IAGA) and 28 to 48 (AGIA…SLLV).

Belongs to the UPF0391 family.

Its subcellular location is the cell membrane. This chain is UPF0391 membrane protein Shewmr4_2671, found in Shewanella sp. (strain MR-4).